A 358-amino-acid chain; its full sequence is DNA primase large subunit PriL (358 aa).

Positions 234, 306, 315, and 322 each coordinate [4Fe-4S] cluster. The interval 335 to 358 (KLDDTDEEELVDWREDEGEEEADA) is disordered. The segment covering 338–358 (DTDEEELVDWREDEGEEEADA) has biased composition (acidic residues).

The protein belongs to the eukaryotic-type primase large subunit family. As to quaternary structure, heterodimer of a small subunit (PriS) and a large subunit (PriL). [4Fe-4S] cluster serves as cofactor.

In terms of biological role, regulatory subunit of DNA primase, an RNA polymerase that catalyzes the synthesis of short RNA molecules used as primers for DNA polymerase during DNA replication. Stabilizes and modulates the activity of the small subunit, increasing the rate of DNA synthesis, and conferring RNA synthesis capability. The DNA polymerase activity may enable DNA primase to also catalyze primer extension after primer synthesis. May also play a role in DNA repair. This Haloarcula marismortui (strain ATCC 43049 / DSM 3752 / JCM 8966 / VKM B-1809) (Halobacterium marismortui) protein is DNA primase large subunit PriL.